The chain runs to 270 residues: L-fucose dehydrogenase (270 aa).

Residues arginine 19, isoleucine 21, aspartate 40, lysine 41, aspartate 62, valine 63, asparagine 89, tyrosine 154, lysine 158, isoleucine 187, threonine 189, and leucine 191 each contribute to the NAD(+) site. Tyrosine 154 (proton acceptor) is an active-site residue.

Belongs to the short-chain dehydrogenases/reductases (SDR) family. Homotetramer. In terms of tissue distribution, detected in retina.

It localises to the cytoplasm. It carries out the reaction L-fucose + NAD(+) = L-fucono-1,5-lactone + NADH + H(+). The catalysed reaction is D-arabinose + NAD(+) = D-arabinono-1,5-lactone + NADH + H(+). The enzyme catalyses L-galactose + NAD(+) = L-galactono-1,5-lactone + NADH + H(+). Its pathway is carbohydrate degradation; L-fucose degradation. Functionally, catalyzes the NAD(+)-dependent oxidation of L-fucose, yielding L-fucono-1,5-lactone, which rapidly converts spontaneously to L-fucone-1,4-lactone. Can also act on D-arabinose and L-galactose, with lower catalytic efficiency. Does not use NADPH. May be the initial enzyme of the putative L-fucose degradation pathway in mammals. The chain is L-fucose dehydrogenase (HSD17B14) from Bos taurus (Bovine).